The primary structure comprises 213 residues: Large ribosomal subunit protein uL3 (213 aa).

Belongs to the universal ribosomal protein uL3 family. Part of the 50S ribosomal subunit. Forms a cluster with proteins L14 and L19.

Functionally, one of the primary rRNA binding proteins, it binds directly near the 3'-end of the 23S rRNA, where it nucleates assembly of the 50S subunit. The chain is Large ribosomal subunit protein uL3 from Kosmotoga olearia (strain ATCC BAA-1733 / DSM 21960 / TBF 19.5.1).